The chain runs to 340 residues: Probable sugar phosphate/phosphate translocator At3g14410 (340 aa).

10 helical membrane passes run glutamate 12–phenylalanine 32, phenylalanine 44–leucine 64, leucine 80–leucine 100, valine 110–alanine 130, leucine 141–isoleucine 161, tryptophan 163–methionine 183, isoleucine 197–phenylalanine 217, valine 234–isoleucine 254, leucine 260–alanine 282, and leucine 286–asparagine 305. The segment at glutamate 320–arginine 340 is disordered. Polar residues predominate over residues leucine 330 to arginine 340.

This sequence belongs to the TPT transporter family. TPT (TC 2.A.7.9) subfamily.

It localises to the membrane. The chain is Probable sugar phosphate/phosphate translocator At3g14410 from Arabidopsis thaliana (Mouse-ear cress).